Here is a 133-residue protein sequence, read N- to C-terminus: Small ribosomal subunit protein eS24z (133 aa).

The segment at 104–133 (KSRKQIKERKNRAKKIRGVKKTKAGDAKKK) is disordered. Residues 109–125 (IKERKNRAKKIRGVKKT) are compositionally biased toward basic residues.

Belongs to the eukaryotic ribosomal protein eS24 family.

In Arabidopsis thaliana (Mouse-ear cress), this protein is Small ribosomal subunit protein eS24z (RPS24A).